We begin with the raw amino-acid sequence, 191 residues long: Corrinoid adenosyltransferase (191 aa).

ATP contacts are provided by residues 10–18, K28, 140–145, and N166; these read TRTGDNGTT and RRAERS.

This sequence belongs to the Cob(I)alamin adenosyltransferase family.

The protein localises to the cytoplasm. It carries out the reaction 2 cob(II)yrinate a,c diamide + reduced [electron-transfer flavoprotein] + 2 ATP = 2 adenosylcob(III)yrinate a,c-diamide + 2 triphosphate + oxidized [electron-transfer flavoprotein] + 3 H(+). It catalyses the reaction 2 cob(II)alamin + reduced [electron-transfer flavoprotein] + 2 ATP = 2 adenosylcob(III)alamin + 2 triphosphate + oxidized [electron-transfer flavoprotein] + 3 H(+). Its pathway is cofactor biosynthesis; adenosylcobalamin biosynthesis; adenosylcobalamin from cob(II)yrinate a,c-diamide: step 2/7. In Mycobacterium leprae (strain TN), this protein is Corrinoid adenosyltransferase.